The sequence spans 426 residues: Serine hydroxymethyltransferase (426 aa).

(6S)-5,6,7,8-tetrahydrofolate-binding positions include leucine 111 and 115-117; that span reads GHL. An N6-(pyridoxal phosphate)lysine modification is found at lysine 220.

The protein belongs to the SHMT family. In terms of assembly, homodimer. It depends on pyridoxal 5'-phosphate as a cofactor.

It localises to the cytoplasm. It catalyses the reaction (6R)-5,10-methylene-5,6,7,8-tetrahydrofolate + glycine + H2O = (6S)-5,6,7,8-tetrahydrofolate + L-serine. Its pathway is one-carbon metabolism; tetrahydrofolate interconversion. The protein operates within amino-acid biosynthesis; glycine biosynthesis; glycine from L-serine: step 1/1. Its function is as follows. Catalyzes the reversible interconversion of serine and glycine with tetrahydrofolate (THF) serving as the one-carbon carrier. This reaction serves as the major source of one-carbon groups required for the biosynthesis of purines, thymidylate, methionine, and other important biomolecules. Also exhibits THF-independent aldolase activity toward beta-hydroxyamino acids, producing glycine and aldehydes, via a retro-aldol mechanism. The protein is Serine hydroxymethyltransferase of Orientia tsutsugamushi (strain Ikeda) (Rickettsia tsutsugamushi).